A 210-amino-acid chain; its full sequence is Orotate phosphoribosyltransferase (210 aa).

Residues Arg-94, Lys-98, His-100, and 120 to 128 each bind 5-phospho-alpha-D-ribose 1-diphosphate; that span reads EDLISTGGS. Ser-124 is an orotate binding site.

Belongs to the purine/pyrimidine phosphoribosyltransferase family. PyrE subfamily. Homodimer. It depends on Mg(2+) as a cofactor.

The enzyme catalyses orotidine 5'-phosphate + diphosphate = orotate + 5-phospho-alpha-D-ribose 1-diphosphate. It functions in the pathway pyrimidine metabolism; UMP biosynthesis via de novo pathway; UMP from orotate: step 1/2. Its function is as follows. Catalyzes the transfer of a ribosyl phosphate group from 5-phosphoribose 1-diphosphate to orotate, leading to the formation of orotidine monophosphate (OMP). This chain is Orotate phosphoribosyltransferase, found in Halalkalibacterium halodurans (strain ATCC BAA-125 / DSM 18197 / FERM 7344 / JCM 9153 / C-125) (Bacillus halodurans).